Consider the following 218-residue polypeptide: MIKITKEANIARNVLLLKGLENPILKEYNDIKEKERELLIAEYLYKIMSLLNLDLKNESLKDTPIRISKMYVNEIFSGLDYKNFPKIMLMDNKIKFHEMIIVRDILLISTCEHHFITINGQATIAYIPENKIIGLSKINRIAQFFAKRPQIQERLTKQILLVLQVLLQTKNVAIIIHMDHFCVKARGVCDTSSSTVTSCLDGLFKSDKNIREEFFFKK.

Cysteine 111, histidine 114, and cysteine 182 together coordinate Zn(2+).

It belongs to the GTP cyclohydrolase I family. In terms of assembly, toroid-shaped homodecamer, composed of two pentamers of five dimers.

The enzyme catalyses GTP + H2O = 7,8-dihydroneopterin 3'-triphosphate + formate + H(+). The protein operates within cofactor biosynthesis; 7,8-dihydroneopterin triphosphate biosynthesis; 7,8-dihydroneopterin triphosphate from GTP: step 1/1. The chain is GTP cyclohydrolase 1 from Buchnera aphidicola subsp. Schizaphis graminum (strain Sg).